Here is a 245-residue protein sequence, read N- to C-terminus: 2,3-bisphosphoglycerate-dependent phosphoglycerate mutase (245 aa).

Substrate is bound by residues 8–15, 21–22, R60, 87–90, K98, 114–115, and 183–184; these read RHGQSLWN, TG, ERHY, RR, and GN. The active-site Tele-phosphohistidine intermediate is the H9. The Proton donor/acceptor role is filled by E87.

Belongs to the phosphoglycerate mutase family. BPG-dependent PGAM subfamily.

It carries out the reaction (2R)-2-phosphoglycerate = (2R)-3-phosphoglycerate. Its pathway is carbohydrate degradation; glycolysis; pyruvate from D-glyceraldehyde 3-phosphate: step 3/5. Catalyzes the interconversion of 2-phosphoglycerate and 3-phosphoglycerate. The polypeptide is 2,3-bisphosphoglycerate-dependent phosphoglycerate mutase (Bacillus cereus (strain ZK / E33L)).